Consider the following 226-residue polypeptide: MHFLIPAAGSGSRMKAGKNKLLIDLEGESLIYWTLKSVFSASSTNWVGIIGQPKDKELLLNSAKNFAHKVHWINGGDTRQESVFNGLKALPKDAEKVLIHDGARCLINPELIDQCANQLDQNEAVILATKVTDTIKIVDNEGFIKETPDRNYLWAAQTPQGFLVDRLKKAHTMAIDKNWKVTDDASLFEMLNWKVKIIEGTYSNIKITSPIDLKIAKLFVKNSTPS.

The protein belongs to the IspD/TarI cytidylyltransferase family. IspD subfamily.

It carries out the reaction 2-C-methyl-D-erythritol 4-phosphate + CTP + H(+) = 4-CDP-2-C-methyl-D-erythritol + diphosphate. It participates in isoprenoid biosynthesis; isopentenyl diphosphate biosynthesis via DXP pathway; isopentenyl diphosphate from 1-deoxy-D-xylulose 5-phosphate: step 2/6. Its function is as follows. Catalyzes the formation of 4-diphosphocytidyl-2-C-methyl-D-erythritol from CTP and 2-C-methyl-D-erythritol 4-phosphate (MEP). The chain is 2-C-methyl-D-erythritol 4-phosphate cytidylyltransferase from Prochlorococcus marinus (strain MIT 9312).